Here is a 234-residue protein sequence, read N- to C-terminus: NAD-dependent protein deacylase (234 aa).

The Deacetylase sirtuin-type domain occupies 1-234; sequence MKNLVVLTGA…ELKQLLIPAP (234 aa). 9–28 is a binding site for NAD(+); the sequence is GAGMSAESGISTFRDAGGLW. 2 residues coordinate substrate: Tyr-53 and Arg-56. Residue 86-89 coordinates NAD(+); the sequence is QNVD. His-104 functions as the Proton acceptor in the catalytic mechanism. 175 to 177 contributes to the NAD(+) binding site; that stretch reads GTS.

Belongs to the sirtuin family. Class III subfamily.

The protein resides in the cytoplasm. It carries out the reaction N(6)-acetyl-L-lysyl-[protein] + NAD(+) + H2O = 2''-O-acetyl-ADP-D-ribose + nicotinamide + L-lysyl-[protein]. It catalyses the reaction N(6)-succinyl-L-lysyl-[protein] + NAD(+) + H2O = 2''-O-succinyl-ADP-D-ribose + nicotinamide + L-lysyl-[protein]. Functionally, NAD-dependent lysine deacetylase and desuccinylase that specifically removes acetyl and succinyl groups on target proteins. Modulates the activities of several proteins which are inactive in their acylated form. This is NAD-dependent protein deacylase from Bacteroides thetaiotaomicron (strain ATCC 29148 / DSM 2079 / JCM 5827 / CCUG 10774 / NCTC 10582 / VPI-5482 / E50).